The following is a 250-amino-acid chain: Octanoyltransferase (250 aa).

The 182-residue stretch at 49–230 folds into the BPL/LPL catalytic domain; that stretch reads DEINDVILVL…ALDDAFAGRL (182 aa). Substrate-binding positions include 87–94, 160–162, and 173–175; these read RGGRITWH, ALG, and GLA. Residue Cys191 is the Acyl-thioester intermediate of the active site.

Belongs to the LipB family.

It localises to the cytoplasm. It carries out the reaction octanoyl-[ACP] + L-lysyl-[protein] = N(6)-octanoyl-L-lysyl-[protein] + holo-[ACP] + H(+). The protein operates within protein modification; protein lipoylation via endogenous pathway; protein N(6)-(lipoyl)lysine from octanoyl-[acyl-carrier-protein]: step 1/2. In terms of biological role, catalyzes the transfer of endogenously produced octanoic acid from octanoyl-acyl-carrier-protein onto the lipoyl domains of lipoate-dependent enzymes. Lipoyl-ACP can also act as a substrate although octanoyl-ACP is likely to be the physiological substrate. This is Octanoyltransferase from Corynebacterium diphtheriae (strain ATCC 700971 / NCTC 13129 / Biotype gravis).